The sequence spans 161 residues: Transcription elongation factor GreB (161 aa).

It belongs to the GreA/GreB family. GreB subfamily.

In terms of biological role, necessary for efficient RNA polymerase transcription elongation past template-encoded arresting sites. The arresting sites in DNA have the property of trapping a certain fraction of elongating RNA polymerases that pass through, resulting in locked ternary complexes. Cleavage of the nascent transcript by cleavage factors such as GreA or GreB allows the resumption of elongation from the new 3'terminus. GreB releases sequences of up to 9 nucleotides in length. The sequence is that of Transcription elongation factor GreB from Vibrio cholerae serotype O1 (strain ATCC 39315 / El Tor Inaba N16961).